The following is a 276-amino-acid chain: Omega-amidase NIT2 (276 aa).

One can recognise a CN hydrolase domain in the interval 4–248 (FRLALIQLQV…ETILYSDIDL (245 aa)). Ser-26 is subject to Phosphoserine. The active-site Proton acceptor is Glu-43. N6-acetyllysine; alternate is present on Lys-68. N6-succinyllysine; alternate is present on Lys-68. Lys-112 serves as the catalytic Proton donor. Lys-123 and Lys-130 each carry N6-succinyllysine. The active-site Nucleophile is the Cys-153.

Belongs to the carbon-nitrogen hydrolase superfamily. NIT1/NIT2 family. In terms of assembly, homodimer.

The protein resides in the cytoplasm. The catalysed reaction is a monoamide of a dicarboxylate + H2O = a dicarboxylate + NH4(+). It catalyses the reaction 2-oxoglutaramate + H2O = 2-oxoglutarate + NH4(+). The enzyme catalyses 2-oxosuccinamate + H2O = oxaloacetate + NH4(+). In terms of biological role, has omega-amidase activity. The role of omega-amidase is to remove potentially toxic intermediates by converting 2-oxoglutaramate and 2-oxosuccinamate to biologically useful 2-oxoglutarate and oxaloacetate, respectively. Can also hydrolyze gamma-monomethyl-alpha-ketoglutarate in vitro. This chain is Omega-amidase NIT2, found in Mus musculus (Mouse).